The sequence spans 514 residues: Peptide chain release factor 3 (514 aa).

The 261-residue stretch at 8–268 (KKRRTFAIIS…IFLKFAPEPH (261 aa)) folds into the tr-type G domain. GTP-binding positions include 17–24 (SHPDAGKT), 85–89 (DTPGH), and 139–142 (NKLD).

It belongs to the TRAFAC class translation factor GTPase superfamily. Classic translation factor GTPase family. PrfC subfamily.

It localises to the cytoplasm. Functionally, increases the formation of ribosomal termination complexes and stimulates activities of RF-1 and RF-2. It binds guanine nucleotides and has strong preference for UGA stop codons. It may interact directly with the ribosome. The stimulation of RF-1 and RF-2 is significantly reduced by GTP and GDP, but not by GMP. This Streptococcus pneumoniae (strain CGSP14) protein is Peptide chain release factor 3.